A 367-amino-acid polypeptide reads, in one-letter code: Alginate lyase (367 aa).

The N-terminal stretch at Met-1–Ala-24 is a signal peptide. Substrate is bound by residues Ser-63–Lys-64, His-136–Thr-137, and Tyr-254.

This sequence belongs to the polysaccharide lyase 5 family.

It localises to the periplasm. It carries out the reaction Eliminative cleavage of alginate to give oligosaccharides with 4-deoxy-alpha-L-erythro-hex-4-enuronosyl groups at their non-reducing ends and beta-D-mannuronate at their reducing end.. Catalyzes the depolymerization of alginate by cleaving the beta-1,4 glycosidic bond between two adjacent sugar residues via a beta-elimination mechanism. May serve to degrade mislocalized alginate that is trapped in the periplasmic space. This chain is Alginate lyase, found in Pseudomonas putida (strain W619).